The sequence spans 934 residues: Complement component C6 (934 aa).

The signal sequence occupies residues 1–21 (MARRSVLYFILLNALINKGQA). Intrachain disulfides connect C22/C61, C24/C65, C35/C73, C39/C78, C82/C117, C93/C127, C96/C133, C140/C151, C146/C164, C158/C173, and C180/C218. 2 TSP type-1 domains span residues 22-79 (CFCD…QRCP) and 81-134 (NCLL…KLCK). W29 carries a C-linked (Man) tryptophan glycan. C-linked (Man) tryptophan; partial glycosylation occurs at W32. The O-linked (Fuc...) threonine glycan is linked to T38. A glycan (C-linked (Man) tryptophan; partial) is linked at W90. The 38-residue stretch at 138 to 175 (ADCKNKFRCDSGRCIARKLECNGENDCGDNSDERDCGR) folds into the LDL-receptor class A domain. Positions 156, 159, 161, 163, 169, and 170 each coordinate Ca(2+). In terms of domain architecture, MACPF spans 176–522 (TKAVCTRKYN…EYAAKFDPCQ (347 aa)). The chain crosses the membrane as a beta stranded span at residues 278-290 (SFSVPIFYSSKRS). N324 carries N-linked (GlcNAc...) asparagine glycosylation. O-linked (Fuc...) threonine glycosylation is present at T392. Cystine bridges form between C399–C420, C499–C623, C521–C570, C523–C539, C526–C541, C543–C552, C577–C611, C589–C601, C644–C686, C672–C699, C704–C746, C732–C761, C773–C823, C784–C801, C786–C837, and C793–C816. A beta stranded membrane pass occupies residues 402–415 (IETKKRVLFAKKTK). One can recognise an EGF-like domain in the interval 523–553 (CAPCPNNGRPTLSGTECLCVCQSGTYGENCE). The TSP type-1 3 domain maps to 565–612 (DGQWGCWSSWSTCDATYKRSRTRECNNPAPQRGGKRCEGEKRQEEDCT). Residues W568, W571, and W574 are each glycosylated (C-linked (Man) tryptophan; partial). CCP regions lie at residues 611–688 (CTFS…RCLP) and 689–765 (DGTW…EKDT). 2 consecutive Sushi domains span residues 642–701 (SGCP…ECQR) and 702–763 (TECI…TCEK). The C5b-binding domain stretch occupies residues 642 to 934 (SGCPQPVPPE…EILHPGKCLA (293 aa)). A factor I module (FIM) 1 region spans residues 766 to 840 (LTKLKGHCQL…FLHIGSCQDG (75 aa)). The Kazal-like 1 domain maps to 780–839 (SGSECICMSPEEDCSHHSEDLCVFDTDSNDYFTSPACKFLAEKCLNNQQLHFLHIGSCQD). N-linked (GlcNAc...) asparagine glycosylation occurs at N855. Residues 858-934 (KKESCGYDTC…EILHPGKCLA (77 aa)) form a factor I module (FIM) 2 region. 5 disulfide bridges follow: C862–C873, C867–C919, C880–C897, C882–C932, and C888–C912. A Kazal-like 2 domain is found at 876–934 (STSKCVCLLPPQCFKGGNQLYCVKMGSSTSEKTLNICEVGTIRCANRKMEILHPGKCLA).

This sequence belongs to the complement C6/C7/C8/C9 family. Component of the membrane attack complex (MAC), composed of complement C5b, C6, C7, C8A, C8B, C8G and multiple copies of the pore-forming subunit C9. In terms of processing, all cysteine residues are assumed to be cross-linked to one another. Individual modules containing an even number of conserved cysteine residues are supposed to have disulfide linkages only within the same module.

It localises to the secreted. Its subcellular location is the target cell membrane. Its activity is regulated as follows. Membrane attack complex (MAC) assembly is inhibited by CD59, thereby protecting self-cells from damage during complement activation. MAC assembly is also inhibited by clusterin (CLU) chaperones that inhibit polymerization of C9. Component of the membrane attack complex (MAC), a multiprotein complex activated by the complement cascade, which inserts into a target cell membrane and forms a pore, leading to target cell membrane rupture and cell lysis. The MAC is initiated by proteolytic cleavage of C5 into complement C5b in response to the classical, alternative, lectin and GZMK complement pathways. The complement pathways consist in a cascade of proteins that leads to phagocytosis and breakdown of pathogens and signaling that strengthens the adaptive immune system. Together with component C5b, involved in MAC complex assembly: complement C5b and C6 associate with the outer leaflet of target cell membrane, reducing the energy for membrane bending. This is Complement component C6 from Homo sapiens (Human).